Reading from the N-terminus, the 266-residue chain is Undecaprenyl-diphosphatase (266 aa).

8 consecutive transmembrane segments (helical) span residues 1–21 (MDTFQVIILALIQGLTEFLPI), 39–59 (QGLSFDVAVNTGSLLAVVMYF), 87–107 (WWIILATIPAVIVGFTAKDFI), 115–135 (AVIATTTIVFGLLLWWADRMF), 144–164 (VGWKKALVIGVAQAMALIPGT), 183–203 (AAARFSFLMSVPVSLGAAILV), 218–238 (ALSLGIIVSFVAAYTCIHLFL), and 246–266 (MTPFVIYRLALGAILCAFMFA).

It belongs to the UppP family.

Its subcellular location is the cell inner membrane. The catalysed reaction is di-trans,octa-cis-undecaprenyl diphosphate + H2O = di-trans,octa-cis-undecaprenyl phosphate + phosphate + H(+). Its function is as follows. Catalyzes the dephosphorylation of undecaprenyl diphosphate (UPP). Confers resistance to bacitracin. The sequence is that of Undecaprenyl-diphosphatase from Shewanella sediminis (strain HAW-EB3).